Consider the following 652-residue polypeptide: DNA ligase (652 aa).

Residues 29-33 (DQEYD), 78-79 (SL), and glutamate 107 contribute to the NAD(+) site. Catalysis depends on lysine 109, which acts as the N6-AMP-lysine intermediate. Residues arginine 130, glutamate 164, lysine 278, and lysine 302 each coordinate NAD(+). Residues cysteine 395, cysteine 398, cysteine 413, and cysteine 418 each coordinate Zn(2+). The BRCT domain maps to 577–652 (DTSAQLFGLT…VKDENWLLQL (76 aa)).

Belongs to the NAD-dependent DNA ligase family. LigA subfamily. The cofactor is Mg(2+). It depends on Mn(2+) as a cofactor.

The enzyme catalyses NAD(+) + (deoxyribonucleotide)n-3'-hydroxyl + 5'-phospho-(deoxyribonucleotide)m = (deoxyribonucleotide)n+m + AMP + beta-nicotinamide D-nucleotide.. In terms of biological role, DNA ligase that catalyzes the formation of phosphodiester linkages between 5'-phosphoryl and 3'-hydroxyl groups in double-stranded DNA using NAD as a coenzyme and as the energy source for the reaction. It is essential for DNA replication and repair of damaged DNA. In Streptococcus uberis (strain ATCC BAA-854 / 0140J), this protein is DNA ligase.